The chain runs to 255 residues: MFLSSRTIFVGLCFLFVLAPCFTRATTNEVQVSCDSHNFNNGKHFRSCVDLPVLDSFLHYSYVRETGVLEVAYRHTNIESSSWIAWGINPTSKGMIGAQTLLAYRNSTSGFMRAYTSSINGYTPMLQEGPLSFRVTQLSAEYLNREMTIFATMVWPSNTTVVNHLWQDGPLKEGDRLGMHAMSGNHLKSMANLDLLSGQVMTTKAANDNMLLVKSIHGLVNAVCWGIFIPIGVMAARYMRTYKGLDPTWFYILIL.

An N-terminal signal peptide occupies residues 1-27 (MFLSSRTIFVGLCFLFVLAPCFTRATT). Residues 54 to 169 (LDSFLHYSYV…TVVNHLWQDG (116 aa)) enclose the DOMON domain. The region spanning 176–255 (RLGMHAMSGN…DPTWFYILIL (80 aa)) is the Cytochrome b561 domain. A helical transmembrane segment spans residues 216–236 (IHGLVNAVCWGIFIPIGVMAA).

It is found in the membrane. In Arabidopsis thaliana (Mouse-ear cress), this protein is Cytochrome b561 and DOMON domain-containing protein At5g48750.